Consider the following 531-residue polypeptide: Probable bifunctional methylthioribulose-1-phosphate dehydratase/enolase-phosphatase E1 2 (531 aa).

A methylthioribulose-1-phosphate dehydratase region spans residues 1 to 248 (MGVPSEGAVG…AIKLHQLGLD (248 aa)). Cys-120 contacts substrate. Residues His-138 and His-140 each contribute to the Zn(2+) site. Catalysis depends on Glu-163, which acts as the Proton donor/acceptor; for methylthioribulose-1-phosphate dehydratase activity. Residue His-213 participates in Zn(2+) binding. Residues 292 to 531 (ILLDIEGTTT…FRTIETFLEI (240 aa)) form an enolase-phosphatase E1 region. 2 residues coordinate Mg(2+): Asp-295 and Glu-297. Substrate-binding positions include 430 to 431 (SS) and Lys-464. Asp-490 is a Mg(2+) binding site.

In the N-terminal section; belongs to the aldolase class II family. MtnB subfamily. The protein in the C-terminal section; belongs to the HAD-like hydrolase superfamily. MasA/MtnC family. It depends on Zn(2+) as a cofactor. Mg(2+) is required as a cofactor.

The enzyme catalyses 5-(methylsulfanyl)-D-ribulose 1-phosphate = 5-methylsulfanyl-2,3-dioxopentyl phosphate + H2O. It catalyses the reaction 5-methylsulfanyl-2,3-dioxopentyl phosphate + H2O = 1,2-dihydroxy-5-(methylsulfanyl)pent-1-en-3-one + phosphate. It participates in amino-acid biosynthesis; L-methionine biosynthesis via salvage pathway; L-methionine from S-methyl-5-thio-alpha-D-ribose 1-phosphate: step 2/6. Its pathway is amino-acid biosynthesis; L-methionine biosynthesis via salvage pathway; L-methionine from S-methyl-5-thio-alpha-D-ribose 1-phosphate: step 3/6. The protein operates within amino-acid biosynthesis; L-methionine biosynthesis via salvage pathway; L-methionine from S-methyl-5-thio-alpha-D-ribose 1-phosphate: step 4/6. In Vitis vinifera (Grape), this protein is Probable bifunctional methylthioribulose-1-phosphate dehydratase/enolase-phosphatase E1 2.